Reading from the N-terminus, the 394-residue chain is 1-deoxy-D-xylulose 5-phosphate reductoisomerase (394 aa).

Residues threonine 10, glycine 11, serine 12, isoleucine 13, asparagine 38, and asparagine 125 each coordinate NADPH. Position 126 (lysine 126) interacts with 1-deoxy-D-xylulose 5-phosphate. Glutamate 127 lines the NADPH pocket. Aspartate 151 provides a ligand contact to Mn(2+). Residues serine 152, glutamate 153, serine 182, and histidine 205 each contribute to the 1-deoxy-D-xylulose 5-phosphate site. Glutamate 153 contacts Mn(2+). Glycine 211 contributes to the NADPH binding site. Positions 218, 223, 224, and 227 each coordinate 1-deoxy-D-xylulose 5-phosphate. Residue glutamate 227 participates in Mn(2+) binding.

This sequence belongs to the DXR family. Requires Mg(2+) as cofactor. Mn(2+) serves as cofactor.

The catalysed reaction is 2-C-methyl-D-erythritol 4-phosphate + NADP(+) = 1-deoxy-D-xylulose 5-phosphate + NADPH + H(+). Its pathway is isoprenoid biosynthesis; isopentenyl diphosphate biosynthesis via DXP pathway; isopentenyl diphosphate from 1-deoxy-D-xylulose 5-phosphate: step 1/6. Functionally, catalyzes the NADPH-dependent rearrangement and reduction of 1-deoxy-D-xylulose-5-phosphate (DXP) to 2-C-methyl-D-erythritol 4-phosphate (MEP). The protein is 1-deoxy-D-xylulose 5-phosphate reductoisomerase of Methylococcus capsulatus (strain ATCC 33009 / NCIMB 11132 / Bath).